A 1068-amino-acid chain; its full sequence is Huntingtin-interacting protein 1-related protein (1068 aa).

Met-1 bears the N-acetylmethionine mark. The region spanning 23 to 151 (EREQFDKTQA…SFHLKHPQFP (129 aa)) is the ENTH domain. Residues 346 to 644 (GSMKDDRDLQ…LQDAVSKLDD (299 aa)) are a coiled coil. Positions 582–610 (EALSQEQQRSSQEKGELRGQLAEKESQEQ) are disordered. Over residues 592–608 (SQEKGELRGQLAEKESQ) the composition is skewed to basic and acidic residues. An I/LWEQ domain is found at 771–1012 (SLDVRQEELG…ELRKQHYVLA (242 aa)). Positions 867-924 (RWTEGLISASKAVGWGATQLVESADKVVLHMGKYEELIVCSHEIAASTAQLVAASKVK) are important for actin binding. A disordered region spans residues 1011–1068 (LAGGMGTPSEEEPSRPSPAPRSGATKKPPLAQKPSIAPRTDNQLDKKDGVYPAQLVNY).

Belongs to the SLA2 family. Homodimer. Interacts with actin; homodimerization promotes actin binding. Interacts with CLTB. Interacts with HIP1. Interacts (via ENTH and I/LWEQ domains) with BCL2L10. In terms of tissue distribution, widely expressed. Expressed at lower levels in skeletal muscle and heart. The level of expression does not change appreciably during development.

The protein resides in the cytoplasm. The protein localises to the perinuclear region. It localises to the endomembrane system. Its subcellular location is the cytoplasmic vesicle. It is found in the clathrin-coated vesicle membrane. Its function is as follows. Component of clathrin-coated pits and vesicles, that may link the endocytic machinery to the actin cytoskeleton. Binds 3-phosphoinositides (via ENTH domain). May act through the ENTH domain to promote cell survival by stabilizing receptor tyrosine kinases following ligand-induced endocytosis. This chain is Huntingtin-interacting protein 1-related protein (Hip1r), found in Mus musculus (Mouse).